A 148-amino-acid chain; its full sequence is Sec-independent protein translocase protein TatB (148 aa).

Residues 1–21 form a helical membrane-spanning segment; the sequence is MFGISFSELLLVGLVALLVLG. The disordered stretch occupies residues 85–148; it reads EPTPVEHVGE…NDTTQPPRAP (64 aa). Residues 107 to 148 show a composition bias toward low complexity; the sequence is APAVAPTESAPVVAPASVEHVAQTAAPTTPAPNDTTQPPRAP.

It belongs to the TatB family. In terms of assembly, the Tat system comprises two distinct complexes: a TatABC complex, containing multiple copies of TatA, TatB and TatC subunits, and a separate TatA complex, containing only TatA subunits. Substrates initially bind to the TatABC complex, which probably triggers association of the separate TatA complex to form the active translocon.

It localises to the cell inner membrane. Its function is as follows. Part of the twin-arginine translocation (Tat) system that transports large folded proteins containing a characteristic twin-arginine motif in their signal peptide across membranes. Together with TatC, TatB is part of a receptor directly interacting with Tat signal peptides. TatB may form an oligomeric binding site that transiently accommodates folded Tat precursor proteins before their translocation. The protein is Sec-independent protein translocase protein TatB of Pseudomonas fluorescens (strain Pf0-1).